The primary structure comprises 301 residues: Cilia- and flagella-associated protein 161 (301 aa).

The segment at 269 to 301 (GNPRDASSSMLDLPKPPTEDTRAMEQAMGLDTQ) is disordered.

In terms of assembly, microtubule inner protein component of sperm flagellar doublet microtubules. Expressed in airway epithelial cells.

It is found in the cytoplasm. It localises to the cytoskeleton. The protein localises to the cilium axoneme. Its subcellular location is the flagellum axoneme. In terms of biological role, microtubule inner protein (MIP) part of the dynein-decorated doublet microtubules (DMTs) in cilia axoneme, which is required for motile cilia beating. The sequence is that of Cilia- and flagella-associated protein 161 from Homo sapiens (Human).